Here is a 360-residue protein sequence, read N- to C-terminus: Protein-glutamate methylesterase/protein-glutamine glutaminase 3 (360 aa).

The Response regulatory domain maps to 14 to 131 (RVLVIDDSAT…AEGVQAYAEE (118 aa)). Asp65 carries the post-translational modification 4-aspartylphosphate. A CheB-type methylesterase domain is found at 169-360 (AGKDGRVVAV…AGKLMELDGA (192 aa)). Catalysis depends on residues Ser181, His207, and Asp303.

It belongs to the CheB family. Phosphorylated by CheA. Phosphorylation of the N-terminal regulatory domain activates the methylesterase activity.

The protein localises to the cytoplasm. It catalyses the reaction [protein]-L-glutamate 5-O-methyl ester + H2O = L-glutamyl-[protein] + methanol + H(+). The enzyme catalyses L-glutaminyl-[protein] + H2O = L-glutamyl-[protein] + NH4(+). Involved in chemotaxis. Part of a chemotaxis signal transduction system that modulates chemotaxis in response to various stimuli. Catalyzes the demethylation of specific methylglutamate residues introduced into the chemoreceptors (methyl-accepting chemotaxis proteins or MCP) by CheR. Also mediates the irreversible deamidation of specific glutamine residues to glutamic acid. This is Protein-glutamate methylesterase/protein-glutamine glutaminase 3 from Burkholderia thailandensis (strain ATCC 700388 / DSM 13276 / CCUG 48851 / CIP 106301 / E264).